The sequence spans 520 residues: Probable E3 ubiquitin-protein ligase XBOS33 (520 aa).

ANK repeat units lie at residues 44–73, 77–106, 111–140, 185–214, and 228–258; these read GLNSPLHFAAAKGHLDIVTLLLEKGADVNV, CGQTALMHACRHGHWEVVQMLLLFRCNVTR, SGRTALHFAAHDGLVRCVRLLLADFVPSAP, GGVTALHMAALNGHFDCMQLLIDLGANVSA, and AGSTPLHYAAGGGNAECCQLLLSKGASKLTL. Residues 327-377 form an RING-type zinc finger; it reads CAVCLERSCSVAAEGCCHEFCIKCALYLCSTSNTRVEFTGPPGSIPCPLCR. The segment covering 467-479 has biased composition (polar residues); sequence QDGSEVQSPQPSH. The tract at residues 467–493 is disordered; the sequence is QDGSEVQSPQPSHCASMEMDKREQQDL. The segment covering 484-493 has biased composition (basic and acidic residues); sequence EMDKREQQDL.

It catalyses the reaction S-ubiquitinyl-[E2 ubiquitin-conjugating enzyme]-L-cysteine + [acceptor protein]-L-lysine = [E2 ubiquitin-conjugating enzyme]-L-cysteine + N(6)-ubiquitinyl-[acceptor protein]-L-lysine.. Its pathway is protein modification; protein ubiquitination. The protein is Probable E3 ubiquitin-protein ligase XBOS33 (XBOS33) of Oryza sativa subsp. japonica (Rice).